A 321-amino-acid chain; its full sequence is Carnitine monooxygenase reductase subunit (321 aa).

The region spanning 4-109 (YQMFEVQVSQ…STPNNLFALI (106 aa)) is the FAD-binding FR-type domain. In terms of domain architecture, 2Fe-2S ferredoxin-type spans 233 to 321 (DAFTLVLARS…AKGKRLVLDL (89 aa)). Residues Cys270, Cys275, Cys278, and Cys308 each coordinate [2Fe-2S] cluster.

The protein belongs to the PDR/VanB family. CntB subfamily. In terms of assembly, composed of an oxygenase subunit (yeaW) and a reductase subunit (yeaX). FMN serves as cofactor. [2Fe-2S] cluster is required as a cofactor.

It catalyses the reaction (R)-carnitine + NADH + O2 + H(+) = (3R)-3-hydroxy-4-oxobutanoate + trimethylamine + NAD(+) + H2O. The enzyme catalyses (R)-carnitine + NADPH + O2 + H(+) = (3R)-3-hydroxy-4-oxobutanoate + trimethylamine + NADP(+) + H2O. It functions in the pathway amine and polyamine metabolism; carnitine metabolism. Functionally, converts carnitine to trimethylamine and malic semialdehyde. Can also use gamma-butyrobetaine, choline and betaine as substrates. The polypeptide is Carnitine monooxygenase reductase subunit (yeaX) (Escherichia coli (strain K12)).